The sequence spans 492 residues: Protein nucleotidyltransferase YdiU (492 aa).

ATP is bound by residues Gly-95, Gly-97, Arg-98, Lys-118, Asp-130, Gly-131, Arg-181, and Arg-188. Asp-257 (proton acceptor) is an active-site residue. Positions 258 and 267 each coordinate Mg(2+). Residue Asp-267 participates in ATP binding. Over residues 466 to 475 (YDDQPEHAEY) the composition is skewed to basic and acidic residues. The disordered stretch occupies residues 466–492 (YDDQPEHAEYRQPPPPSEKPYQTFCGT).

It belongs to the SELO family. Requires Mg(2+) as cofactor. It depends on Mn(2+) as a cofactor.

The enzyme catalyses L-seryl-[protein] + ATP = 3-O-(5'-adenylyl)-L-seryl-[protein] + diphosphate. It catalyses the reaction L-threonyl-[protein] + ATP = 3-O-(5'-adenylyl)-L-threonyl-[protein] + diphosphate. It carries out the reaction L-tyrosyl-[protein] + ATP = O-(5'-adenylyl)-L-tyrosyl-[protein] + diphosphate. The catalysed reaction is L-histidyl-[protein] + UTP = N(tele)-(5'-uridylyl)-L-histidyl-[protein] + diphosphate. The enzyme catalyses L-seryl-[protein] + UTP = O-(5'-uridylyl)-L-seryl-[protein] + diphosphate. It catalyses the reaction L-tyrosyl-[protein] + UTP = O-(5'-uridylyl)-L-tyrosyl-[protein] + diphosphate. Functionally, nucleotidyltransferase involved in the post-translational modification of proteins. It can catalyze the addition of adenosine monophosphate (AMP) or uridine monophosphate (UMP) to a protein, resulting in modifications known as AMPylation and UMPylation. In Syntrophotalea carbinolica (strain DSM 2380 / NBRC 103641 / GraBd1) (Pelobacter carbinolicus), this protein is Protein nucleotidyltransferase YdiU.